The primary structure comprises 429 residues: Enolase (429 aa).

Q163 contributes to the (2R)-2-phosphoglycerate binding site. E205 serves as the catalytic Proton donor. Residues D242, E285, and D312 each contribute to the Mg(2+) site. K337, R366, S367, and K388 together coordinate (2R)-2-phosphoglycerate. Catalysis depends on K337, which acts as the Proton acceptor.

This sequence belongs to the enolase family. Mg(2+) serves as cofactor.

The protein resides in the cytoplasm. Its subcellular location is the secreted. It localises to the cell surface. It carries out the reaction (2R)-2-phosphoglycerate = phosphoenolpyruvate + H2O. It functions in the pathway carbohydrate degradation; glycolysis; pyruvate from D-glyceraldehyde 3-phosphate: step 4/5. Catalyzes the reversible conversion of 2-phosphoglycerate (2-PG) into phosphoenolpyruvate (PEP). It is essential for the degradation of carbohydrates via glycolysis. The chain is Enolase from Methylorubrum extorquens (strain CM4 / NCIMB 13688) (Methylobacterium extorquens).